A 76-amino-acid polypeptide reads, in one-letter code: UPF0291 protein Aflv_1503 (76 aa).

Residues 56–76 (DPNGNDVTPQKLKDSKKKRLH) are disordered.

Belongs to the UPF0291 family.

The protein localises to the cytoplasm. This chain is UPF0291 protein Aflv_1503, found in Anoxybacillus flavithermus (strain DSM 21510 / WK1).